A 333-amino-acid chain; its full sequence is tRNA(Ile)-lysidine synthase (333 aa).

33–38 (SGGADS) is an ATP binding site.

This sequence belongs to the tRNA(Ile)-lysidine synthase family.

It is found in the cytoplasm. It catalyses the reaction cytidine(34) in tRNA(Ile2) + L-lysine + ATP = lysidine(34) in tRNA(Ile2) + AMP + diphosphate + H(+). Functionally, ligates lysine onto the cytidine present at position 34 of the AUA codon-specific tRNA(Ile) that contains the anticodon CAU, in an ATP-dependent manner. Cytidine is converted to lysidine, thus changing the amino acid specificity of the tRNA from methionine to isoleucine. In Salinispora tropica (strain ATCC BAA-916 / DSM 44818 / JCM 13857 / NBRC 105044 / CNB-440), this protein is tRNA(Ile)-lysidine synthase.